We begin with the raw amino-acid sequence, 427 residues long: Enolase (427 aa).

Gln163 is a (2R)-2-phosphoglycerate binding site. Glu205 acts as the Proton donor in catalysis. Mg(2+) contacts are provided by Asp242, Glu285, and Asp312. Lys337, Arg366, Ser367, and Lys388 together coordinate (2R)-2-phosphoglycerate. Lys337 acts as the Proton acceptor in catalysis.

It belongs to the enolase family. It depends on Mg(2+) as a cofactor.

It localises to the cytoplasm. Its subcellular location is the secreted. The protein resides in the cell surface. The catalysed reaction is (2R)-2-phosphoglycerate = phosphoenolpyruvate + H2O. Its pathway is carbohydrate degradation; glycolysis; pyruvate from D-glyceraldehyde 3-phosphate: step 4/5. Its function is as follows. Catalyzes the reversible conversion of 2-phosphoglycerate (2-PG) into phosphoenolpyruvate (PEP). It is essential for the degradation of carbohydrates via glycolysis. The protein is Enolase of Leptothrix cholodnii (strain ATCC 51168 / LMG 8142 / SP-6) (Leptothrix discophora (strain SP-6)).